The primary structure comprises 1485 residues: Chromosome partition protein MukB (1485 aa).

An ATP-binding site is contributed by 34–41 (GGNGAGKS). Coiled-coil stretches lie at residues 337 to 480 (LNLV…QAYQ), 509 to 605 (QHLA…PVWL), 780 to 805 (RAARENRLETLYQERDRLAERYATLS), 835 to 915 (EAEI…IQQH), 977 to 1116 (GMLT…AKAG), and 1210 to 1235 (EAIEQMEIELGRLTEELTAREQKLAI). A flexible hinge region spans residues 666 to 783 (PSGAEDARLI…EVPLFGRAAR (118 aa)).

The protein belongs to the SMC family. MukB subfamily. In terms of assembly, homodimerization via its hinge domain. Binds to DNA via its C-terminal region. Interacts, and probably forms a ternary complex, with MukE and MukF via its C-terminal region. The complex formation is stimulated by calcium or magnesium. Interacts with tubulin-related protein FtsZ.

It localises to the cytoplasm. It is found in the nucleoid. In terms of biological role, plays a central role in chromosome condensation, segregation and cell cycle progression. Functions as a homodimer, which is essential for chromosome partition. Involved in negative DNA supercoiling in vivo, and by this means organize and compact chromosomes. May achieve or facilitate chromosome segregation by condensation DNA from both sides of a centrally located replisome during cell division. This chain is Chromosome partition protein MukB, found in Yersinia pseudotuberculosis serotype O:1b (strain IP 31758).